A 143-amino-acid polypeptide reads, in one-letter code: Nucleoside diphosphate kinase (143 aa).

ATP is bound by residues Lys11, Phe59, Arg87, Thr93, Arg104, and Asn114. Residue His117 is the Pros-phosphohistidine intermediate of the active site.

The protein belongs to the NDK family. In terms of assembly, homotetramer. Requires Mg(2+) as cofactor.

Its subcellular location is the cytoplasm. The catalysed reaction is a 2'-deoxyribonucleoside 5'-diphosphate + ATP = a 2'-deoxyribonucleoside 5'-triphosphate + ADP. It catalyses the reaction a ribonucleoside 5'-diphosphate + ATP = a ribonucleoside 5'-triphosphate + ADP. In terms of biological role, major role in the synthesis of nucleoside triphosphates other than ATP. The ATP gamma phosphate is transferred to the NDP beta phosphate via a ping-pong mechanism, using a phosphorylated active-site intermediate. The sequence is that of Nucleoside diphosphate kinase from Ectopseudomonas mendocina (strain ymp) (Pseudomonas mendocina).